We begin with the raw amino-acid sequence, 78 residues long: UPF0335 protein RrIowa_0193 (78 aa).

The protein belongs to the UPF0335 family.

This chain is UPF0335 protein RrIowa_0193, found in Rickettsia rickettsii (strain Iowa).